The chain runs to 370 residues: Leucine-rich repeat-containing protein 19 (370 aa).

The N-terminal stretch at 1–24 (MKVTGITILFWPLSMILLSDKIQS) is a signal peptide. At 25-270 (SKREVQCNFT…SEHEPLGKSW (246 aa)) the chain is on the extracellular side. N32, N37, N62, and N95 each carry an N-linked (GlcNAc...) asparagine glycan. 5 LRR repeats span residues 46–71 (KKDVTILDLSYNQITLNGTDTRVLQT), 72–95 (YFLLTELYLIENKVTILHNNGFGN), 96–119 (LSSLEILNICRNSIYVIQQGAFLG), 120–143 (LNKLKQLYLCQNKIEQLNADVFVP), and 145–168 (RSLKLLNLQGNLISYLDVPPLFHL). The LRRCT domain occupies 176–227 (NLWNCSCSLFNLQNWLNTSNVTLENENITMCSYPNSLQSYNIKTVPHKAECH). N-linked (GlcNAc...) asparagine glycosylation is found at N179, N192, N195, N202, N251, and N256. The helical transmembrane segment at 271 to 291 (AFLVGVVVTVLTTSLLIFIAI) threads the bilayer. Residues 292–370 (KCPIWYNILL…IDIHELCEEN (79 aa)) lie on the Cytoplasmic side of the membrane.

Interacts with TRAF2 and TRAF6. As to expression, expressed in renal collecting duct epithelial cells.

It is found in the membrane. With respect to regulation, activated by TLR ligands such as LPS, bacterial DNA and peptidoglycan. Its function is as follows. Pathogen-recognition receptor which mediates the activation of TRAF2- and TRAF6 NF-kappa-B signaling pathways and induces the expression of pro-inflammatory cytokines. In kidney, prevents infection by uropathogenic bacteria by inducing the production of cytokines, chemokines and antimicrobial substances. In gut, involved in host-microbiota interactions, plays a critical role in promoting the recruitment of immune cells and intestinal inflammation. This is Leucine-rich repeat-containing protein 19 from Homo sapiens (Human).